Consider the following 435-residue polypeptide: 3-phosphoshikimate 1-carboxyvinyltransferase (435 aa).

The 3-phosphoshikimate site is built by Lys-15, Ser-16, and Arg-20. Lys-15 lines the phosphoenolpyruvate pocket. 2 residues coordinate phosphoenolpyruvate: Gly-96 and Arg-124. 3-phosphoshikimate-binding residues include Ser-169, Gln-171, Ser-195, Asp-319, and Lys-346. A phosphoenolpyruvate-binding site is contributed by Gln-171. Catalysis depends on Asp-319, which acts as the Proton acceptor. The phosphoenolpyruvate site is built by Arg-350 and Arg-395.

This sequence belongs to the EPSP synthase family. As to quaternary structure, monomer.

It localises to the cytoplasm. It carries out the reaction 3-phosphoshikimate + phosphoenolpyruvate = 5-O-(1-carboxyvinyl)-3-phosphoshikimate + phosphate. The protein operates within metabolic intermediate biosynthesis; chorismate biosynthesis; chorismate from D-erythrose 4-phosphate and phosphoenolpyruvate: step 6/7. Functionally, catalyzes the transfer of the enolpyruvyl moiety of phosphoenolpyruvate (PEP) to the 5-hydroxyl of shikimate-3-phosphate (S3P) to produce enolpyruvyl shikimate-3-phosphate and inorganic phosphate. This Chlorobium phaeobacteroides (strain BS1) protein is 3-phosphoshikimate 1-carboxyvinyltransferase.